Consider the following 86-residue polypeptide: Protein YwqI (86 aa).

A coiled-coil region spans residues 57–83 (DYKKAVQKNIEDTKDNVDSLKEQDEAI).

The sequence is that of Protein YwqI (ywqI) from Bacillus subtilis (strain 168).